A 362-amino-acid polypeptide reads, in one-letter code: Probable RNA methyltransferase Tbd_1951 (362 aa).

The active-site Proton acceptor is the E89. Residues 92–318 (LLPRDGVCVS…AKLRHSAGQD (227 aa)) form the Radical SAM core domain. A disulfide bond links C99 and C323. [4Fe-4S] cluster-binding residues include C106, C110, and C113. S-adenosyl-L-methionine-binding positions include 151–152 (GE), S181, 204–206 (SLH), and N280. Catalysis depends on C323, which acts as the S-methylcysteine intermediate. The tract at residues 342-362 (LPSAETPAASPKAAASIGFPG) is disordered. Residues 343–362 (PSAETPAASPKAAASIGFPG) show a composition bias toward low complexity.

The protein belongs to the radical SAM superfamily. RlmN family. Requires [4Fe-4S] cluster as cofactor.

The protein localises to the cytoplasm. In Thiobacillus denitrificans (strain ATCC 25259 / T1), this protein is Probable RNA methyltransferase Tbd_1951.